We begin with the raw amino-acid sequence, 273 residues long: uncharacterized protein (273 aa).

It belongs to the ycf23 family.

It localises to the plastid. Its subcellular location is the chloroplast. This is an uncharacterized protein from Pyropia yezoensis (Susabi-nori).